A 398-amino-acid chain; its full sequence is Putative defective protein IntQ (398 aa).

Positions 51 to 146 (LTIKELAEKF…NLNAVFQFGV (96 aa)) constitute a Core-binding (CB) domain. Residues 167–378 (TIPDPLSREE…SENNNAQVAL (212 aa)) form the Tyr recombinase domain. Residues arginine 202, lysine 236, arginine 331, and histidine 354 contribute to the active site. Tyrosine 364 functions as the O-(3'-phospho-DNA)-tyrosine intermediate in the catalytic mechanism.

It belongs to the 'phage' integrase family.

Integrase is necessary for integration of the phage into the host genome by site-specific recombination. In conjunction with excisionase, integrase is also necessary for excision of the prophage from the host genome. This is Putative defective protein IntQ (intQ) from Escherichia coli (strain K12).